The sequence spans 635 residues: Interferon-induced GTP-binding protein Mx1 (635 aa).

A Dynamin-type G domain is found at 31–309 (DLALPAIAVI…LVHHIELSLP (279 aa)). Positions 41 to 48 (GDQSSGKS) are G1 motif. 41–48 (GDQSSGKS) provides a ligand contact to GTP. Residues 66-68 (VTR) are G2 motif. A G3 motif region spans residues 147-150 (DLPG). Residues 147 to 151 (DLPGI) and 216 to 219 (TKPD) each bind GTP. A G4 motif region spans residues 216 to 219 (TKPD). A G5 motif region spans residues 248–251 (RCRG). The 87-residue stretch at 549-635 (LEELMRHLKS…MEARNYLVKF (87 aa)) folds into the GED domain.

It belongs to the TRAFAC class dynamin-like GTPase superfamily. Dynamin/Fzo/YdjA family.

The protein resides in the cytoplasm. In Ictalurus punctatus (Channel catfish), this protein is Interferon-induced GTP-binding protein Mx1 (mx1).